The chain runs to 310 residues: L-lactate dehydrogenase (310 aa).

Residues 10-11 (MV), Asp32, Tyr62, and 76-77 (GV) each bind NAD(+). Residues Gln79, Arg85, and 117-120 (NPVD) each bind substrate. NAD(+) contacts are provided by residues 115–117 (ATN) and Ser140. A substrate-binding site is contributed by 145 to 148 (DTAR). Residues Arg150 and 162–167 (QSVHAY) each bind beta-D-fructose 1,6-bisphosphate. The Proton acceptor role is filled by His172. Residue Tyr218 is modified to Phosphotyrosine. Thr227 provides a ligand contact to substrate.

It belongs to the LDH/MDH superfamily. LDH family. Homotetramer.

Its subcellular location is the cytoplasm. It catalyses the reaction (S)-lactate + NAD(+) = pyruvate + NADH + H(+). The protein operates within fermentation; pyruvate fermentation to lactate; (S)-lactate from pyruvate: step 1/1. With respect to regulation, allosterically activated by fructose 1,6-bisphosphate (FBP). It binds two fructose 1,6-bisphosphate (FBP) molecules per tetramer. Functionally, catalyzes the conversion of lactate to pyruvate. In Thermus caldophilus, this protein is L-lactate dehydrogenase.